The primary structure comprises 267 residues: Glutamate 5-kinase (267 aa).

An ATP-binding site is contributed by lysine 14. Substrate is bound by residues serine 54, aspartate 141, and asparagine 157. Residues 177–178 (SD) and 219–225 (TGGMMSK) each bind ATP.

It belongs to the glutamate 5-kinase family.

It localises to the cytoplasm. It catalyses the reaction L-glutamate + ATP = L-glutamyl 5-phosphate + ADP. It participates in amino-acid biosynthesis; L-proline biosynthesis; L-glutamate 5-semialdehyde from L-glutamate: step 1/2. Its function is as follows. Catalyzes the transfer of a phosphate group to glutamate to form L-glutamate 5-phosphate. The protein is Glutamate 5-kinase of Streptococcus thermophilus (strain CNRZ 1066).